The sequence spans 511 residues: MSKSKTKTDKRNQSSLSRIKLSALHYCMSDAEPSIAYLQDNSAFINNEWHNLVLEKIFPVYNPSTEEDITQVSEKSQHDSTEEDITQVSEKSQHDDDKAVVDISERGRLLNILADLIERDRDILAAIEHLDNGKPFDEAYLLDLASVLKELRYTAGWADKLHGTLRFAITIPTFQDLRFLRYTRHEPVGVCGEIIPWNIPLLMYIWKIGPALAAGNTVVLKPEELTPLTALTVATLIKEAGFPPGVVNVVSGYGPTAGAACLSHKDNDKLAFTGSTLVGKVVMKAAAKSNLKKVTLELGGKSPMIVFIDADLDWAVENAHFGVFFNQGQCCIAQSRITVHESIYDEIVERDLEKAKKQVLGNPFESDTRYGPQILKIEFDSIPRLINSAKAEGAKVLCGGGRDDSCVGYYIQPTVFADVTDEMRIAKEEIFGPVITISRFKSVDEAIKRVDNTKYGLAAYVFTKDKAIRISAALKAGTVWVNCVHVASYQIPFGGNKNSGMGRELGEYGLE.

Residues 1–21 constitute a mitochondrion transit peptide; it reads MSKSKTKTDKRNQSSLSRIKL. The segment at 72 to 92 is disordered; that stretch reads VSEKSQHDSTEEDITQVSEKS. Residue 274 to 279 coordinates NAD(+); sequence GSTLVG. The Proton acceptor role is filled by Glu-297. The active-site Nucleophile is the Cys-331.

The protein belongs to the aldehyde dehydrogenase family.

It is found in the mitochondrion matrix. The catalysed reaction is an aldehyde + NAD(+) + H2O = a carboxylate + NADH + 2 H(+). Its pathway is alcohol metabolism; ethanol degradation; acetate from ethanol: step 2/2. The polypeptide is Aldehyde dehydrogenase 2, mitochondrial (ALD2) (Saccharomyces cerevisiae (Baker's yeast)).